Consider the following 325-residue polypeptide: Protease HtpX homolog (325 aa).

Residues I20–M40 form a helical membrane-spanning segment. H130 is a Zn(2+) binding site. E131 is a catalytic residue. H134 is a Zn(2+) binding site. The next 2 membrane-spanning stretches (helical) occupy residues I145 to G165 and V173 to V193. Residue E202 participates in Zn(2+) binding. Residues A288 to S325 form a disordered region. Over residues R306–S325 the composition is skewed to low complexity.

The protein belongs to the peptidase M48B family. The cofactor is Zn(2+).

The protein localises to the cell inner membrane. The sequence is that of Protease HtpX homolog from Brucella suis (strain ATCC 23445 / NCTC 10510).